The following is a 586-amino-acid chain: ATP-dependent RNA helicase DBP9 (586 aa).

The short motif at 21–49 (TTWESFGLDARLLQAIDQLGFENPTLIQS) is the Q motif element. A Helicase ATP-binding domain is found at 53 to 234 (PLAIEEKRDI…SKFCSRPAIL (182 aa)). An ATP-binding site is contributed by 66–73 (ASTGSGKT). Residues 180–183 (DEVD) carry the DEAD box motif. The Helicase C-terminal domain occupies 245 to 467 (NLVQYYAKTT…EIKPYQFDMK (223 aa)). Positions 339–349 (EDEKDEGEEIE) are enriched in acidic residues. 2 disordered regions span residues 339–375 (EDEK…DKEY) and 560–586 (HKNK…FRPK). The span at 350-360 (ENKNEENDGKT) shows a compositional bias: basic and acidic residues. The span at 560 to 574 (HKNKVHKNRKRKPSG) shows a compositional bias: basic residues. Positions 575–586 (RKPDPLKSFRPK) are enriched in basic and acidic residues.

The protein belongs to the DEAD box helicase family. DDX56/DBP9 subfamily.

It is found in the nucleus. It localises to the nucleolus. The enzyme catalyses ATP + H2O = ADP + phosphate + H(+). In terms of biological role, ATP-binding RNA helicase involved in the biogenesis of 60S ribosomal subunits and is required for the normal formation of 25S and 5.8S rRNAs. The protein is ATP-dependent RNA helicase DBP9 (DBP9) of Debaryomyces hansenii (strain ATCC 36239 / CBS 767 / BCRC 21394 / JCM 1990 / NBRC 0083 / IGC 2968) (Yeast).